The sequence spans 363 residues: Branched-chain-amino-acid aminotransferase 2 (363 aa).

The residue at position 197 (Lys197) is an N6-(pyridoxal phosphate)lysine.

It belongs to the class-IV pyridoxal-phosphate-dependent aminotransferase family. It depends on pyridoxal 5'-phosphate as a cofactor.

It carries out the reaction L-leucine + 2-oxoglutarate = 4-methyl-2-oxopentanoate + L-glutamate. The enzyme catalyses L-isoleucine + 2-oxoglutarate = (S)-3-methyl-2-oxopentanoate + L-glutamate. It catalyses the reaction L-valine + 2-oxoglutarate = 3-methyl-2-oxobutanoate + L-glutamate. The protein operates within amino-acid biosynthesis; L-isoleucine biosynthesis; L-isoleucine from 2-oxobutanoate: step 4/4. Its pathway is amino-acid biosynthesis; L-leucine biosynthesis; L-leucine from 3-methyl-2-oxobutanoate: step 4/4. It functions in the pathway amino-acid biosynthesis; L-valine biosynthesis; L-valine from pyruvate: step 4/4. With respect to regulation, inhibited by canaline. Functionally, transaminates branched-chain amino acids and ketoglutarate. The protein is Branched-chain-amino-acid aminotransferase 2 (ilvK) of Bacillus subtilis (strain 168).